The chain runs to 1262 residues: ATP-dependent helicase/nuclease subunit A (1262 aa).

The region spanning 5-476 (FSFTPSQDQA…IVLAENFRSM (472 aa)) is the UvrD-like helicase ATP-binding domain. 26-33 (ASAGSGKT) is an ATP binding site. Residues 515 to 808 (DTVTSTAELL…SVMTIHGSKG (294 aa)) form the UvrD-like helicase C-terminal domain.

It belongs to the helicase family. AddA subfamily. As to quaternary structure, heterodimer of AddA and AddB/RexB. It depends on Mg(2+) as a cofactor.

It catalyses the reaction Couples ATP hydrolysis with the unwinding of duplex DNA by translocating in the 3'-5' direction.. It carries out the reaction ATP + H2O = ADP + phosphate + H(+). Functionally, the heterodimer acts as both an ATP-dependent DNA helicase and an ATP-dependent, dual-direction single-stranded exonuclease. Recognizes the chi site generating a DNA molecule suitable for the initiation of homologous recombination. The AddA nuclease domain is required for chi fragment generation; this subunit has the helicase and 3' -&gt; 5' nuclease activities. This is ATP-dependent helicase/nuclease subunit A from Levilactobacillus brevis (strain ATCC 367 / BCRC 12310 / CIP 105137 / JCM 1170 / LMG 11437 / NCIMB 947 / NCTC 947) (Lactobacillus brevis).